The sequence spans 415 residues: Plasminogen activator inhibitor 2 (415 aa).

Cysteine 5 and cysteine 405 are oxidised to a cystine. Asparagine 75, asparagine 115, and asparagine 339 each carry an N-linked (GlcNAc...) asparagine glycan.

Belongs to the serpin family. Ov-serpin subfamily. In terms of assembly, interacts with PSMB1. Post-translationally, the signal sequence is not cleaved.

It is found in the cytoplasm. It localises to the secreted. Its subcellular location is the extracellular space. In terms of biological role, inhibits urokinase-type plasminogen activator. The monocyte derived PAI-2 is distinct from the endothelial cell-derived PAI-1. The protein is Plasminogen activator inhibitor 2 (SERPINB2) of Homo sapiens (Human).